Reading from the N-terminus, the 350-residue chain is Ion-translocating oxidoreductase complex subunit D (350 aa).

4 helical membrane-spanning segments follow: residues 20-40 (VMLW…LFFG), 42-62 (GNLI…AAFL), 89-109 (LPQF…IVVA), and 120-140 (PFNP…VAMT). The residue at position 178 (Thr178) is an FMN phosphoryl threonine. 5 helical membrane-spanning segments follow: residues 204-224 (LIAR…VLLI), 228-248 (IITW…SLAF), 255-275 (YAPL…FFIA), 282-302 (ATSH…VYLI), and 306-326 (GNYP…VPFI).

This sequence belongs to the NqrB/RnfD family. The complex is composed of six subunits: RnfA, RnfB, RnfC, RnfD, RnfE and RnfG. The cofactor is FMN.

Its subcellular location is the cell inner membrane. Functionally, part of a membrane-bound complex that couples electron transfer with translocation of ions across the membrane. The sequence is that of Ion-translocating oxidoreductase complex subunit D from Marinobacter nauticus (strain ATCC 700491 / DSM 11845 / VT8) (Marinobacter aquaeolei).